The sequence spans 562 residues: 3-(3-hydroxy-phenyl)propionate/3-hydroxycinnamic acid hydroxylase (562 aa).

FAD contacts are provided by residues 8–37 (DVVI…IIEE) and 275–285 (FRKGRMLLAGD).

It belongs to the PheA/TfdB FAD monooxygenase family. FAD serves as cofactor.

The catalysed reaction is 3-(3-hydroxyphenyl)propanoate + NADH + O2 + H(+) = 3-(2,3-dihydroxyphenyl)propanoate + NAD(+) + H2O. It carries out the reaction (2E)-3-(3-hydroxyphenyl)prop-2-enoate + NADH + O2 + H(+) = (2E)-3-(2,3-dihydroxyphenyl)prop-2-enoate + NAD(+) + H2O. It participates in aromatic compound metabolism; 3-phenylpropanoate degradation. Catalyzes the insertion of one atom of molecular oxygen into position 2 of the phenyl ring of 3-(3-hydroxyphenyl)propionate (3-HPP) and hydroxycinnamic acid (3HCI). The sequence is that of 3-(3-hydroxy-phenyl)propionate/3-hydroxycinnamic acid hydroxylase from Mycolicibacterium smegmatis (strain ATCC 700084 / mc(2)155) (Mycobacterium smegmatis).